Here is a 174-residue protein sequence, read N- to C-terminus: Adenine phosphoribosyltransferase (174 aa).

This sequence belongs to the purine/pyrimidine phosphoribosyltransferase family. As to quaternary structure, homodimer.

It is found in the cytoplasm. It catalyses the reaction AMP + diphosphate = 5-phospho-alpha-D-ribose 1-diphosphate + adenine. It participates in purine metabolism; AMP biosynthesis via salvage pathway; AMP from adenine: step 1/1. Catalyzes a salvage reaction resulting in the formation of AMP, that is energically less costly than de novo synthesis. This chain is Adenine phosphoribosyltransferase, found in Lachnoclostridium phytofermentans (strain ATCC 700394 / DSM 18823 / ISDg) (Clostridium phytofermentans).